The primary structure comprises 602 residues: Elongation factor 4 (602 aa).

Positions E7–K188 constitute a tr-type G domain. GTP contacts are provided by residues D19–T24 and N135–D138.

It belongs to the TRAFAC class translation factor GTPase superfamily. Classic translation factor GTPase family. LepA subfamily.

The protein resides in the cell inner membrane. The catalysed reaction is GTP + H2O = GDP + phosphate + H(+). Functionally, required for accurate and efficient protein synthesis under certain stress conditions. May act as a fidelity factor of the translation reaction, by catalyzing a one-codon backward translocation of tRNAs on improperly translocated ribosomes. Back-translocation proceeds from a post-translocation (POST) complex to a pre-translocation (PRE) complex, thus giving elongation factor G a second chance to translocate the tRNAs correctly. Binds to ribosomes in a GTP-dependent manner. This is Elongation factor 4 from Chlamydia trachomatis serovar L2 (strain ATCC VR-902B / DSM 19102 / 434/Bu).